A 261-amino-acid chain; its full sequence is Imidazole glycerol phosphate synthase subunit HisF (261 aa).

Residues D11 and D130 contribute to the active site.

The protein belongs to the HisA/HisF family. As to quaternary structure, heterodimer of HisH and HisF.

It localises to the cytoplasm. The catalysed reaction is 5-[(5-phospho-1-deoxy-D-ribulos-1-ylimino)methylamino]-1-(5-phospho-beta-D-ribosyl)imidazole-4-carboxamide + L-glutamine = D-erythro-1-(imidazol-4-yl)glycerol 3-phosphate + 5-amino-1-(5-phospho-beta-D-ribosyl)imidazole-4-carboxamide + L-glutamate + H(+). The protein operates within amino-acid biosynthesis; L-histidine biosynthesis; L-histidine from 5-phospho-alpha-D-ribose 1-diphosphate: step 5/9. IGPS catalyzes the conversion of PRFAR and glutamine to IGP, AICAR and glutamate. The HisF subunit catalyzes the cyclization activity that produces IGP and AICAR from PRFAR using the ammonia provided by the HisH subunit. The sequence is that of Imidazole glycerol phosphate synthase subunit HisF from Heliobacterium modesticaldum (strain ATCC 51547 / Ice1).